Consider the following 209-residue polypeptide: GTP cyclohydrolase-2 (209 aa).

49 to 53 is a GTP binding site; sequence RIHSE. Zn(2+) contacts are provided by C54, C65, and C67. GTP-binding positions include Q70, 92 to 94, and T114; that span reads EGR. D126 functions as the Proton acceptor in the catalytic mechanism. Residue R128 is the Nucleophile of the active site. GTP contacts are provided by T149 and K154.

This sequence belongs to the GTP cyclohydrolase II family. The cofactor is Zn(2+).

It catalyses the reaction GTP + 4 H2O = 2,5-diamino-6-hydroxy-4-(5-phosphoribosylamino)-pyrimidine + formate + 2 phosphate + 3 H(+). Its pathway is cofactor biosynthesis; riboflavin biosynthesis; 5-amino-6-(D-ribitylamino)uracil from GTP: step 1/4. Functionally, catalyzes the conversion of GTP to 2,5-diamino-6-ribosylamino-4(3H)-pyrimidinone 5'-phosphate (DARP), formate and pyrophosphate. This Shewanella halifaxensis (strain HAW-EB4) protein is GTP cyclohydrolase-2.